The following is a 445-amino-acid chain: Tubulin alpha-3 chain (445 aa).

Q11, E72, S141, G145, T146, T180, N207, and N229 together coordinate GTP. E72 contacts Mg(2+). Residue E255 is part of the active site.

The protein belongs to the tubulin family. In terms of assembly, dimer of alpha and beta chains. A typical microtubule is a hollow water-filled tube with an outer diameter of 25 nm and an inner diameter of 15 nM. Alpha-beta heterodimers associate head-to-tail to form protofilaments running lengthwise along the microtubule wall with the beta-tubulin subunit facing the microtubule plus end conferring a structural polarity. Microtubules usually have 13 protofilaments but different protofilament numbers can be found in some organisms and specialized cells. Interacts with NUM1. Mg(2+) is required as a cofactor.

It localises to the cytoplasm. The protein localises to the cytoskeleton. The enzyme catalyses GTP + H2O = GDP + phosphate + H(+). Its function is as follows. Tubulin is the major constituent of microtubules, a cylinder consisting of laterally associated linear protofilaments composed of alpha- and beta-tubulin heterodimers. Microtubules grow by the addition of GTP-tubulin dimers to the microtubule end, where a stabilizing cap forms. Below the cap, tubulin dimers are in GDP-bound state, owing to GTPase activity of alpha-tubulin. The polypeptide is Tubulin alpha-3 chain (TUB3) (Saccharomyces cerevisiae (strain ATCC 204508 / S288c) (Baker's yeast)).